We begin with the raw amino-acid sequence, 163 residues long: Epithelial membrane protein 3 (163 aa).

The chain crosses the membrane as a helical span at residues 4–24 (LLLVVSALHILILVLLFVATL). 2 N-linked (GlcNAc...) asparagine glycosylation sites follow: Asn46 and Asn56. Transmembrane regions (helical) follow at residues 66-86 (VQALMVLSLILCCLSFILFMF), 100-120 (TGLCQLCTSAAVFSGALIYAI), and 139-159 (FALAWVAFPLALVSGTVYIHL).

The protein belongs to the PMP-22/EMP/MP20 family.

The protein resides in the membrane. Probably involved in cell proliferation and cell-cell interactions. The chain is Epithelial membrane protein 3 (Emp3) from Mus musculus (Mouse).